The chain runs to 159 residues: Transcription elongation factor GreA (159 aa).

The protein belongs to the GreA/GreB family.

Its function is as follows. Necessary for efficient RNA polymerase transcription elongation past template-encoded arresting sites. The arresting sites in DNA have the property of trapping a certain fraction of elongating RNA polymerases that pass through, resulting in locked ternary complexes. Cleavage of the nascent transcript by cleavage factors such as GreA or GreB allows the resumption of elongation from the new 3'terminus. GreA releases sequences of 2 to 3 nucleotides. In Psychromonas ingrahamii (strain DSM 17664 / CCUG 51855 / 37), this protein is Transcription elongation factor GreA.